We begin with the raw amino-acid sequence, 64 residues long: MAAKKGVRIIITLECTECRTNTDKRSPGVSRYTTSKNRRNTTGRMEIKKFCPHCNTHTIHKEIK.

It belongs to the bacterial ribosomal protein bL33 family.

The protein is Large ribosomal subunit protein bL33 of Rippkaea orientalis (strain PCC 8801 / RF-1) (Cyanothece sp. (strain PCC 8801)).